A 196-amino-acid chain; its full sequence is GTP cyclohydrolase-2 (196 aa).

A GTP-binding site is contributed by 49 to 53; it reads RVHSE. 3 residues coordinate Zn(2+): C54, C65, and C67. GTP is bound by residues Q70, 92-94, and T114; that span reads EGR. The Proton acceptor role is filled by D126. The active-site Nucleophile is R128. T149 and K154 together coordinate GTP.

It belongs to the GTP cyclohydrolase II family. In terms of assembly, homodimer. Zn(2+) is required as a cofactor.

It carries out the reaction GTP + 4 H2O = 2,5-diamino-6-hydroxy-4-(5-phosphoribosylamino)-pyrimidine + formate + 2 phosphate + 3 H(+). It functions in the pathway cofactor biosynthesis; riboflavin biosynthesis; 5-amino-6-(D-ribitylamino)uracil from GTP: step 1/4. Catalyzes the conversion of GTP to 2,5-diamino-6-ribosylamino-4(3H)-pyrimidinone 5'-phosphate (DARP), formate and pyrophosphate. The polypeptide is GTP cyclohydrolase-2 (Citrobacter koseri (strain ATCC BAA-895 / CDC 4225-83 / SGSC4696)).